Consider the following 157-residue polypeptide: Acetyltransferase PseH (157 aa).

An N-acetyltransferase domain is found at K5 to C152.

In terms of biological role, catalyzes the third step in the biosynthesis of pseudaminic acid, a sialic-acid-like sugar that is used to modify flagellin. Mediates N-4 acetylation of UDP-4-amino-4,6-dideoxy-beta-L-AltNAc to form UDP-2,4-diacetamido-2,4,6-trideoxy-beta-L-altropyranose. This is Acetyltransferase PseH (pseH) from Campylobacter jejuni subsp. jejuni serotype O:2 (strain ATCC 700819 / NCTC 11168).